Reading from the N-terminus, the 155-residue chain is Ribosome maturation factor RimP (155 aa).

It belongs to the RimP family.

Its subcellular location is the cytoplasm. In terms of biological role, required for maturation of 30S ribosomal subunits. The sequence is that of Ribosome maturation factor RimP from Dichelobacter nodosus (strain VCS1703A).